Consider the following 205-residue polypeptide: Cyanate hydratase (205 aa).

Residues arginine 133, glutamate 136, and serine 159 contribute to the active site.

Belongs to the cyanase family.

It carries out the reaction cyanate + hydrogencarbonate + 3 H(+) = NH4(+) + 2 CO2. In terms of biological role, catalyzes the reaction of cyanate with bicarbonate to produce ammonia and carbon dioxide. The chain is Cyanate hydratase from Thalassiosira pseudonana (Marine diatom).